Here is a 147-residue protein sequence, read N- to C-terminus: 3-dehydroquinate dehydratase (147 aa).

The active-site Proton acceptor is the tyrosine 24. Substrate-binding residues include asparagine 75, histidine 81, and aspartate 88. The active-site Proton donor is histidine 101. Residues 102-103 (IS) and arginine 112 contribute to the substrate site.

It belongs to the type-II 3-dehydroquinase family. Homododecamer.

The enzyme catalyses 3-dehydroquinate = 3-dehydroshikimate + H2O. The protein operates within metabolic intermediate biosynthesis; chorismate biosynthesis; chorismate from D-erythrose 4-phosphate and phosphoenolpyruvate: step 3/7. In terms of biological role, catalyzes a trans-dehydration via an enolate intermediate. The protein is 3-dehydroquinate dehydratase of Cereibacter sphaeroides (strain ATCC 17023 / DSM 158 / JCM 6121 / CCUG 31486 / LMG 2827 / NBRC 12203 / NCIMB 8253 / ATH 2.4.1.) (Rhodobacter sphaeroides).